We begin with the raw amino-acid sequence, 188 residues long: Marginal zone B- and B1-cell-specific protein (188 aa).

Positions methionine 1–alanine 20 are cleaved as a signal peptide. Cystine bridges form between cysteine 49-cysteine 177, cysteine 52-cysteine 170, and cysteine 94-cysteine 142. The Prevents secretion from ER motif lies at arginine 185–leucine 188.

It belongs to the MZB1 family. In terms of assembly, part of the ER chaperone complex, a multi-protein complex in the endoplasmic reticulum containing a large number of molecular chaperones which associates with unassembled incompletely folded immunoglobulin heavy chains. Interacts with HSP90B1 and PDIA3 in a calcium-dependent manner. In terms of processing, forms an interchain disulfide bond with IgM monomers. In terms of tissue distribution, expressed predominantly in the spleen and lymph nodes. Abundantly expressed in marginal zone B and B1 cells. High expression in mesenteric adipose tissue (MAT). Expressed also in pancreas, perigonadal adipose tissue (PAT), uterus, subcutaneous adipose tissue, heart, muscle, ovary and liver. Very low expression is detected in brown adipose tissue. In PAT, significantly higher expression in stromal-vascular cell than in adipocytes. Expressed in macrophage RAW 264.7 cell line. Down-regulated in For-knockout female MAT at 5 months (obese state) followed by steep up-regulation at 9 months (prediabetic condition) when mutants progress towards the metabolic syndrome.

It localises to the endoplasmic reticulum. The protein resides in the endoplasmic reticulum lumen. Its subcellular location is the secreted. Associates with immunoglobulin M (IgM) heavy and light chains and promotes IgM assembly and secretion. May exert its effect by acting as a molecular chaperone or as an oxidoreductase as it displays a low level of oxidoreductase activity. Helps to diversify peripheral B-cell functions by regulating Ca(2+) stores, antibody secretion and integrin activation. Functionally, acts as a hormone-regulated adipokine/pro-inflammatory cytokine that is implicated in causing chronic inflammation, affecting cellular expansion and blunting insulin response in adipocytes. May have a role in the onset of insulin resistance. The sequence is that of Marginal zone B- and B1-cell-specific protein (Mzb1) from Mus musculus (Mouse).